The following is a 1066-amino-acid chain: DNA-directed RNA polymerase subunit beta (1066 aa).

This sequence belongs to the RNA polymerase beta chain family. As to quaternary structure, in plastids the minimal PEP RNA polymerase catalytic core is composed of four subunits: alpha, beta, beta', and beta''. When a (nuclear-encoded) sigma factor is associated with the core the holoenzyme is formed, which can initiate transcription.

It is found in the plastid. Its subcellular location is the chloroplast. It carries out the reaction RNA(n) + a ribonucleoside 5'-triphosphate = RNA(n+1) + diphosphate. Its function is as follows. DNA-dependent RNA polymerase catalyzes the transcription of DNA into RNA using the four ribonucleoside triphosphates as substrates. This is DNA-directed RNA polymerase subunit beta from Coffea arabica (Arabian coffee).